A 147-amino-acid polypeptide reads, in one-letter code: Large ribosomal subunit protein uL15 (147 aa).

Over residues 1 to 12 the composition is skewed to basic and acidic residues; it reads MTLRLNDLKPAD. A disordered region spans residues 1–61; the sequence is MTLRLNDLKP…GFEGGQTPMQ (61 aa). Gly residues predominate over residues 23 to 33; sequence RGIGSGLGKTA. The span at 34-47 shows a compositional bias: basic residues; sequence GRGHKGSFARKGGG.

It belongs to the universal ribosomal protein uL15 family. As to quaternary structure, part of the 50S ribosomal subunit.

Binds to the 23S rRNA. This is Large ribosomal subunit protein uL15 from Xanthomonas oryzae pv. oryzae (strain MAFF 311018).